We begin with the raw amino-acid sequence, 67 residues long: Brevinin-1CDYc (67 aa).

Residues 1–22 (MFTLKKSLLLIFFLGTINLSLC) form the signal peptide. Positions 23-45 (EEERNADEEERRDDPEERDVEVE) are excised as a propeptide. A disulfide bridge links Cys61 with Cys67.

The protein belongs to the frog skin active peptide (FSAP) family. Brevinin subfamily. As to expression, expressed by the skin glands.

The protein resides in the secreted. Its function is as follows. Antimicrobial peptide. The polypeptide is Brevinin-1CDYc (Rana huanrensis (Huanren frog)).